Here is a 147-residue protein sequence, read N- to C-terminus: uncharacterized protein (147 aa).

This is an uncharacterized protein from Aedes vexans (Inland floodwater mosquito).